Consider the following 135-residue polypeptide: Large ribosomal subunit protein uL16c (135 aa).

The protein belongs to the universal ribosomal protein uL16 family. In terms of assembly, part of the 50S ribosomal subunit.

The protein resides in the plastid. The protein localises to the chloroplast. The chain is Large ribosomal subunit protein uL16c from Ranunculus macranthus (Large buttercup).